Reading from the N-terminus, the 500-residue chain is L-arabinose isomerase (500 aa).

Residues Glu-306, Glu-333, His-350, and His-450 each contribute to the Mn(2+) site.

This sequence belongs to the arabinose isomerase family. As to quaternary structure, homohexamer. Requires Mn(2+) as cofactor.

It catalyses the reaction beta-L-arabinopyranose = L-ribulose. It functions in the pathway carbohydrate degradation; L-arabinose degradation via L-ribulose; D-xylulose 5-phosphate from L-arabinose (bacterial route): step 1/3. In terms of biological role, catalyzes the conversion of L-arabinose to L-ribulose. The sequence is that of L-arabinose isomerase from Yersinia pestis bv. Antiqua (strain Nepal516).